The following is an 808-amino-acid chain: PH domain-containing protein DDB_G0275795 (808 aa).

Positions 57-121 (ENLEILKEIK…RNRQASQQEL (65 aa)) form a coiled coil. A compositionally biased stretch (polar residues) spans 108–120 (ESTTRNRQASQQE). 6 disordered regions span residues 108 to 127 (ESTT…PPIL), 228 to 325 (GANA…QDEE), 339 to 375 (EKLK…QLQS), 405 to 475 (QQQQ…NGSN), 523 to 542 (DQTK…ELKK), and 645 to 675 (KGGG…SNTD). A PH domain is found at 124-216 (PPILSGYLKK…WTEGLKEFKK (93 aa)). Over residues 228 to 248 (GANANGNGNSSPNMSSSGSYS) the composition is skewed to low complexity. The segment covering 255-274 (ESSQQPLNSSTGAINTTPQR) has biased composition (polar residues). The segment covering 293–321 (SHSSSSTAPDSPTLSSSYVPPPSSSNLNP) has biased composition (low complexity). Residues 322–412 (QDEELKRREN…QQQQQQQQQQ (91 aa)) adopt a coiled-coil conformation. Residues 339 to 353 (EKLKQQDDQQQDDKQ) show a composition bias toward basic and acidic residues. 2 stretches are compositionally biased toward low complexity: residues 354–375 (QQQQ…QLQS) and 405–414 (QQQQQQQQPP). Positions 417–428 (SPQNSRHGSTNY) are enriched in polar residues. Residues 429 to 449 (SQLQQQQQQPQQQPQQQSSPQ) show a composition bias toward low complexity. Over residues 450–475 (VIISNNNSPRFESQQQQNNFHNNGSN) the composition is skewed to polar residues. Residues 487–645 (DELNKKFLKE…DKYINELLEK (159 aa)) are a coiled coil. Over residues 525 to 542 (TKTDAEEKQNKSSNELKK) the composition is skewed to basic and acidic residues. Low complexity predominate over residues 654–673 (NSNNNNNSNNNNNNSNNNSN). Residues 678 to 734 (KESMVAHQTQNAFLLQEIQRLETQSQFKLDIKIQQIEELENQLEQQLYQFHRFREAI) are a coiled coil.

The sequence is that of PH domain-containing protein DDB_G0275795 from Dictyostelium discoideum (Social amoeba).